Here is a 302-residue protein sequence, read N- to C-terminus: Deubiquitinase OTUD6B (302 aa).

Acidic residues predominate over residues 1–10 (MEGSEDEEAE). 2 disordered regions span residues 1–52 (MEGS…KQLA) and 99–121 (EQQI…AALE). Residues 106 to 116 (RISKAQKRREK) are compositionally biased toward basic residues. The 138-residue stretch at 156–293 (LEIKQIPSDG…GEHYNSVKLL (138 aa)) folds into the OTU domain. Residues 161 to 167 (IPSDGHC) are cys-loop. Asp-164 is an active-site residue. Cys-167 serves as the catalytic Nucleophile. Residues 228–238 (IANTAAWGGQL) are variable-loop. The interval 276-286 (YMRHAYGLGEH) is his-loop. His-286 is an active-site residue.

It carries out the reaction Thiol-dependent hydrolysis of ester, thioester, amide, peptide and isopeptide bonds formed by the C-terminal Gly of ubiquitin (a 76-residue protein attached to proteins as an intracellular targeting signal).. Deubiquitinating enzyme that may play a role in the ubiquitin-dependent regulation of different cellular processes. The protein is Deubiquitinase OTUD6B (OTUD6B) of Gallus gallus (Chicken).